The following is a 222-amino-acid chain: Coiled-coil domain-containing protein 70 (222 aa).

Coiled-coil stretches lie at residues 34–62 (LQEEKAFREEMRHFREKIEDFREEMWNFR) and 129–188 (NALW…KAAW).

The chain is Coiled-coil domain-containing protein 70 (CCDC70) from Bos taurus (Bovine).